The following is a 177-amino-acid chain: 3-hydroxydecanoyl-[acyl-carrier-protein] dehydratase (177 aa).

H76 is an active-site residue.

The protein belongs to the thioester dehydratase family. FabA subfamily. As to quaternary structure, homodimer.

The protein resides in the cytoplasm. It catalyses the reaction a (3R)-hydroxyacyl-[ACP] = a (2E)-enoyl-[ACP] + H2O. It carries out the reaction (3R)-hydroxydecanoyl-[ACP] = (2E)-decenoyl-[ACP] + H2O. The enzyme catalyses (2E)-decenoyl-[ACP] = (3Z)-decenoyl-[ACP]. The protein operates within lipid metabolism; fatty acid biosynthesis. In terms of biological role, necessary for the introduction of cis unsaturation into fatty acids. Catalyzes the dehydration of (3R)-3-hydroxydecanoyl-ACP to E-(2)-decenoyl-ACP and then its isomerization to Z-(3)-decenoyl-ACP. Can catalyze the dehydratase reaction for beta-hydroxyacyl-ACPs with saturated chain lengths up to 16:0, being most active on intermediate chain length. This Haemophilus influenzae (strain PittGG) protein is 3-hydroxydecanoyl-[acyl-carrier-protein] dehydratase.